The following is a 173-amino-acid chain: Shikimate kinase 2 (173 aa).

12 to 17 (GCGKTT) lines the ATP pocket. Mg(2+)-binding residues include T16 and D32. Substrate contacts are provided by D34, R58, and G79. The LID domain stretch occupies residues 112-126 (QASPQAHQRPTLTGR). R120 contacts ATP. R139 contacts substrate. ATP is bound at residue Q155.

As to quaternary structure, monomer. Mg(2+) serves as cofactor.

Its subcellular location is the cytoplasm. It catalyses the reaction shikimate + ATP = 3-phosphoshikimate + ADP + H(+). It functions in the pathway metabolic intermediate biosynthesis; chorismate biosynthesis; chorismate from D-erythrose 4-phosphate and phosphoenolpyruvate: step 5/7. Its activity is regulated as follows. Inhibited by chloride and sulfate ions. Its function is as follows. Catalyzes the specific phosphorylation of the 3-hydroxyl group of shikimic acid using ATP as a cosubstrate. The sequence is that of Shikimate kinase 2 (aroL) from Dickeya chrysanthemi (Pectobacterium chrysanthemi).